We begin with the raw amino-acid sequence, 123 residues long: Small ribosomal subunit protein uS13 (123 aa).

The segment at Pro97 to Lys123 is disordered.

This sequence belongs to the universal ribosomal protein uS13 family. In terms of assembly, part of the 30S ribosomal subunit. Forms a loose heterodimer with protein S19. Forms two bridges to the 50S subunit in the 70S ribosome.

Its function is as follows. Located at the top of the head of the 30S subunit, it contacts several helices of the 16S rRNA. In the 70S ribosome it contacts the 23S rRNA (bridge B1a) and protein L5 of the 50S subunit (bridge B1b), connecting the 2 subunits; these bridges are implicated in subunit movement. Contacts the tRNAs in the A and P-sites. The polypeptide is Small ribosomal subunit protein uS13 (Ehrlichia ruminantium (strain Gardel)).